We begin with the raw amino-acid sequence, 352 residues long: Methylthioribose-1-phosphate isomerase (352 aa).

Residues 55-57 (RGA), Arg-98, and Gln-201 each bind substrate. The active-site Proton donor is the Asp-242. Position 252-253 (252-253 (NK)) interacts with substrate.

The protein belongs to the eIF-2B alpha/beta/delta subunits family. MtnA subfamily.

It catalyses the reaction 5-(methylsulfanyl)-alpha-D-ribose 1-phosphate = 5-(methylsulfanyl)-D-ribulose 1-phosphate. It functions in the pathway amino-acid biosynthesis; L-methionine biosynthesis via salvage pathway; L-methionine from S-methyl-5-thio-alpha-D-ribose 1-phosphate: step 1/6. In terms of biological role, catalyzes the interconversion of methylthioribose-1-phosphate (MTR-1-P) into methylthioribulose-1-phosphate (MTRu-1-P). The protein is Methylthioribose-1-phosphate isomerase of Methylococcus capsulatus (strain ATCC 33009 / NCIMB 11132 / Bath).